A 400-amino-acid chain; its full sequence is WD repeat and FYVE domain-containing protein 2 (400 aa).

6 WD repeats span residues 22 to 61, 66 to 105, 112 to 150, 153 to 192, 197 to 236, and 240 to 279; these read GSQE…QYWP, AMPS…NKMT, AHQS…QRLG, RTSA…CTLL, GHTG…GTAI, and GHND…QETP. The segment at 281-352 adopts an FYVE-type zinc-finger fold; sequence WLDSDSCQKC…VCDSCHEAIT (72 aa). Cys-287, Cys-290, Cys-314, Cys-317, Cys-322, Cys-325, Cys-344, and Cys-347 together coordinate Zn(2+). The stretch at 364–399 is one WD 7 repeat; that stretch reads DSKHNIVHVHFDATRGWLLTSGTDKVIKLWDMTPVV.

Homodimer. Interacts (via WD repeats 1-3) with AKT1, AKT2, PRKCZ and PRKCI. Interacts with VAMP2. Forms a complex with VAMP2 and PRKCZ. Interacts with FOXO1. Forms a complex with AKT1 and FOXO1. In terms of tissue distribution, highly expressed in the brain (at protein level).

The protein resides in the endosome. Its subcellular location is the early endosome. It localises to the cytoplasm. Acts in an adapter protein-like fashion to mediate the interaction between the kinase PRKCZ and its substrate VAMP2 and increases the PRKCZ-dependent phosphorylation of VAMP2. Positively regulates adipocyte differentiation, by facilitating the phosphorylation and thus inactivation of the anti-adipogenetic transcription factor FOXO1 by the kinase AKT1. Plays a role in endosomal control of AKT2 signaling; required for insulin-stimulated AKT2 phosphorylation and glucose uptake and insulin-stimulated phosphorylation of AKT2 substrates. Participates in transferrin receptor endocytosis. This chain is WD repeat and FYVE domain-containing protein 2 (Wdfy2), found in Mus musculus (Mouse).